Consider the following 389-residue polypeptide: Stilbene synthase 1 (389 aa).

55-58 (KFQR) lines the substrate pocket. Residue C164 is part of the active site. Substrate contacts are provided by residues L267 and 305–307 (GGR).

The protein belongs to the thiolase-like superfamily. Chalcone/stilbene synthases family. As to quaternary structure, homodimer.

The protein resides in the cytoplasm. The catalysed reaction is 4-coumaroyl-CoA + 3 malonyl-CoA + 3 H(+) = trans-resveratrol + 4 CO2 + 4 CoA. The protein operates within phytoalexin biosynthesis; 3,4',5-trihydroxystilbene biosynthesis; 3,4',5-trihydroxystilbene from trans-4-coumarate: step 2/2. The protein is Stilbene synthase 1 of Arachis hypogaea (Peanut).